Here is a 257-residue protein sequence, read N- to C-terminus: Receptor expression-enhancing protein 4 (257 aa).

The next 2 membrane-spanning stretches (helical) occupy residues 1–21 (MVSW…CPAY) and 42–62 (WIVF…ISWF). Residues S152 and S194 each carry the phosphoserine modification. The disordered stretch occupies residues 178-257 (PHQRPPIGYR…KKTVPSDMDS (80 aa)). At T196 the chain carries Phosphothreonine. S202 carries the post-translational modification Phosphoserine. A Phosphothreonine modification is found at T250. S253 bears the Phosphoserine mark.

Belongs to the DP1 family.

It is found in the endoplasmic reticulum membrane. Microtubule-binding protein required to ensure proper cell division and nuclear envelope reassembly by sequestering the endoplasmic reticulum away from chromosomes during mitosis. Probably acts by clearing the endoplasmic reticulum membrane from metaphase chromosomes. The sequence is that of Receptor expression-enhancing protein 4 (REEP4) from Pongo abelii (Sumatran orangutan).